The following is a 300-amino-acid chain: Protein YIF1B (300 aa).

The disordered stretch occupies residues 1 to 46; that stretch reads MNQESSFRAPPKRRVRGPNPNISTPHQLFDDTSGGPVPHGGEYPNH. Residues 1–142 are Cytoplasmic-facing; sequence MNQESSFRAP…APRFDINAPD (142 aa). A helical membrane pass occupies residues 143–163; the sequence is LYIPVMAFITYILVAGLALGT. The Extracellular portion of the chain corresponds to 164-178; it reads QSRFSPEILGMQASS. A helical transmembrane segment spans residues 179–199; it reads ALAWLIVEVLAILLSLYLVTV. At 200 to 205 the chain is on the cytoplasmic side; the sequence is NTDLTT. A helical transmembrane segment spans residues 206–226; it reads VDLVAFSGYKYVGMISGVISG. Residue Leu-227 is a topological domain, extracellular. A helical membrane pass occupies residues 228–248; it reads LFGKTGYYVVLSWCGISVVFF. At 249 to 278 the chain is on the cytoplasmic side; it reads MIRTLRLKILSEAAAEGVLVRGARNQLRMY. Residues 279–299 traverse the membrane as a helical segment; it reads LTMAIAAVQPIFMYWLTYHLV. Position 300 (Arg-300) is a topological domain, extracellular.

The protein belongs to the YIF1 family.

The protein resides in the endoplasmic reticulum membrane. It is found in the golgi apparatus membrane. Its subcellular location is the endoplasmic reticulum-Golgi intermediate compartment membrane. In terms of biological role, functions in endoplasmic reticulum to Golgi vesicle-mediated transport and regulates the proper organization of the endoplasmic reticulum and the Golgi. Plays a key role in targeting to neuronal dendrites receptors such as HTR1A. Plays also a role in primary cilium and sperm flagellum assembly probably through protein transport to these compartments. In Xenopus tropicalis (Western clawed frog), this protein is Protein YIF1B (yif1b).